The chain runs to 191 residues: Threonylcarbamoyl-AMP synthase (191 aa).

One can recognise a YrdC-like domain in the interval 7–191 (QSELNDALKI…FHASTGKRLR (185 aa)).

Belongs to the SUA5 family. TsaC subfamily.

It localises to the cytoplasm. The catalysed reaction is L-threonine + hydrogencarbonate + ATP = L-threonylcarbamoyladenylate + diphosphate + H2O. Required for the formation of a threonylcarbamoyl group on adenosine at position 37 (t(6)A37) in tRNAs that read codons beginning with adenine. Catalyzes the conversion of L-threonine, HCO(3)(-)/CO(2) and ATP to give threonylcarbamoyl-AMP (TC-AMP) as the acyladenylate intermediate, with the release of diphosphate. The sequence is that of Threonylcarbamoyl-AMP synthase from Psychromonas ingrahamii (strain DSM 17664 / CCUG 51855 / 37).